A 134-amino-acid chain; its full sequence is Small ribosomal subunit protein uS8c (134 aa).

It belongs to the universal ribosomal protein uS8 family. As to quaternary structure, part of the 30S ribosomal subunit.

Its subcellular location is the plastid. It is found in the chloroplast. In terms of biological role, one of the primary rRNA binding proteins, it binds directly to 16S rRNA central domain where it helps coordinate assembly of the platform of the 30S subunit. This chain is Small ribosomal subunit protein uS8c (rps8), found in Phaseolus angularis (Azuki bean).